The following is a 372-amino-acid chain: Glutamate 5-kinase (372 aa).

Lys14 is an ATP binding site. Residues Ser54, Asp141, and Asn153 each contribute to the substrate site. Residues 173–174 (TD) and 215–221 (TGGMATK) each bind ATP. Residues 280–358 (RGQLVIDAGA…DSIEEVLGYD (79 aa)) form the PUA domain.

Belongs to the glutamate 5-kinase family.

Its subcellular location is the cytoplasm. The enzyme catalyses L-glutamate + ATP = L-glutamyl 5-phosphate + ADP. It participates in amino-acid biosynthesis; L-proline biosynthesis; L-glutamate 5-semialdehyde from L-glutamate: step 1/2. Functionally, catalyzes the transfer of a phosphate group to glutamate to form L-glutamate 5-phosphate. This Shewanella pealeana (strain ATCC 700345 / ANG-SQ1) protein is Glutamate 5-kinase.